A 77-amino-acid chain; its full sequence is Acyl carrier protein (77 aa).

Residues 1–76 (MDREQRIKEI…DVINYLNEKL (76 aa)) form the Carrier domain. An O-(pantetheine 4'-phosphoryl)serine modification is found at S36.

It belongs to the acyl carrier protein (ACP) family. 4'-phosphopantetheine is transferred from CoA to a specific serine of apo-ACP by AcpS. This modification is essential for activity because fatty acids are bound in thioester linkage to the sulfhydryl of the prosthetic group.

It is found in the cytoplasm. Its pathway is lipid metabolism; fatty acid biosynthesis. Carrier of the growing fatty acid chain in fatty acid biosynthesis. This Hydrogenobaculum sp. (strain Y04AAS1) protein is Acyl carrier protein.